The primary structure comprises 272 residues: Orotidine 5'-phosphate decarboxylase (272 aa).

The Proton donor role is filled by Lys-95.

This sequence belongs to the OMP decarboxylase family. Type 2 subfamily.

It carries out the reaction orotidine 5'-phosphate + H(+) = UMP + CO2. Its pathway is pyrimidine metabolism; UMP biosynthesis via de novo pathway; UMP from orotate: step 2/2. The sequence is that of Orotidine 5'-phosphate decarboxylase from Cupriavidus necator (strain ATCC 17699 / DSM 428 / KCTC 22496 / NCIMB 10442 / H16 / Stanier 337) (Ralstonia eutropha).